A 332-amino-acid polypeptide reads, in one-letter code: Small ribosomal subunit biogenesis GTPase RsgA (332 aa).

The region spanning 103–259 is the CP-type G domain; that stretch reads RQQLIAANLD…LIDTPGMREL (157 aa). GTP contacts are provided by residues 148–151 and 201–209; these read TKVD and GSSGAGKST. Positions 281, 286, 288, and 294 each coordinate Zn(2+).

This sequence belongs to the TRAFAC class YlqF/YawG GTPase family. RsgA subfamily. In terms of assembly, monomer. Associates with 30S ribosomal subunit, binds 16S rRNA. The cofactor is Zn(2+).

It is found in the cytoplasm. In terms of biological role, one of several proteins that assist in the late maturation steps of the functional core of the 30S ribosomal subunit. Helps release RbfA from mature subunits. May play a role in the assembly of ribosomal proteins into the subunit. Circularly permuted GTPase that catalyzes slow GTP hydrolysis, GTPase activity is stimulated by the 30S ribosomal subunit. The polypeptide is Small ribosomal subunit biogenesis GTPase RsgA (Xylella fastidiosa (strain M12)).